Consider the following 166-residue polypeptide: Large ribosomal subunit protein uL10 (166 aa).

It belongs to the universal ribosomal protein uL10 family. In terms of assembly, part of the ribosomal stalk of the 50S ribosomal subunit. The N-terminus interacts with L11 and the large rRNA to form the base of the stalk. The C-terminus forms an elongated spine to which L12 dimers bind in a sequential fashion forming a multimeric L10(L12)X complex.

Functionally, forms part of the ribosomal stalk, playing a central role in the interaction of the ribosome with GTP-bound translation factors. The chain is Large ribosomal subunit protein uL10 from Shouchella clausii (strain KSM-K16) (Alkalihalobacillus clausii).